A 192-amino-acid polypeptide reads, in one-letter code: Small ribosomal subunit protein uS4B (192 aa).

Phosphoserine is present on residues serine 89 and serine 179. The region spanning 107–181 is the S4 RNA-binding domain; it reads RRLQTQVFKL…CKRKRLRSQQ (75 aa). The segment at 166 to 192 is disordered; it reads GGRPGRCKRKRLRSQQEGGEGEEAEEE.

This sequence belongs to the universal ribosomal protein uS4 family. As to quaternary structure, component of the small ribosomal subunit (SSU). Mature yeast ribosomes consist of a small (40S) and a large (60S) subunit. The 40S small subunit contains 1 molecule of ribosomal RNA (18S rRNA) and at least 33 different proteins. The large 60S subunit contains 3 rRNA molecules (25S, 5.8S and 5S rRNA) and at least 46 different proteins. Interacts with snoRNA U3. uS11 interacts with MPP10. Component of the ribosomal small subunit (SSU) processome composed of at least 40 protein subunits and snoRNA U3.

It is found in the cytoplasm. Functionally, component of the ribosome, a large ribonucleoprotein complex responsible for the synthesis of proteins in the cell. The small ribosomal subunit (SSU) binds messenger RNAs (mRNAs) and translates the encoded message by selecting cognate aminoacyl-transfer RNA (tRNA) molecules. The large subunit (LSU) contains the ribosomal catalytic site termed the peptidyl transferase center (PTC), which catalyzes the formation of peptide bonds, thereby polymerizing the amino acids delivered by tRNAs into a polypeptide chain. The nascent polypeptides leave the ribosome through a tunnel in the LSU and interact with protein factors that function in enzymatic processing, targeting, and the membrane insertion of nascent chains at the exit of the ribosomal tunnel. uS4 is involved in nucleolar processing of pre-18S ribosomal RNA and ribosome assembly. In Schizosaccharomyces pombe (strain 972 / ATCC 24843) (Fission yeast), this protein is Small ribosomal subunit protein uS4B (rps902).